Consider the following 431-residue polypeptide: Saglin (431 aa).

An N-terminal signal peptide occupies residues 1–39 (MSVRGYSGVQVISSRKHRSMSRLPTVLLLLASAAVLAAG). N-linked (GlcNAc...) asparagine glycosylation occurs at asparagine 95. Residues 120-169 (LDDAQRQMEQEHRQYAATLEEQLHAAQQETQQEQEMKKALQKQLDALTDS) are a coiled coil.

In terms of assembly, homodimer; disulfide-linked. (Microbial infection) Interacts with Plasmodium berghei TRAP (via integrin-like A-domain); the interaction probably promotes sporozoite invasion of salivary gland. As to expression, female saliva (at protein level). Female salivary gland (at protein level).

The protein resides in the secreted. Functionally, (Microbial infection) Facilitates invasion of mosquito salivary glands by Plasmodium yoelii sporozoites. (Microbial infection) Facilitates invasion of mosquito salivary glands by Plasmodium falciparum sporozoites. In terms of biological role, (Microbial infection) Probably facilitates invasion of mosquito salivary glands by Plasmodium berghei sporozoites. The chain is Saglin from Anopheles gambiae (African malaria mosquito).